A 391-amino-acid polypeptide reads, in one-letter code: Ethanol acetyltransferase 1 (391 aa).

The N-terminal 24 residues, 1-24 (MFFTKVLNNQVANGLKQLPVHKRV), are a transit peptide targeting the mitochondrion. An AB hydrolase-1 domain is found at 48-154 (PIVFVHGIFG…DNSPIEQPHI (107 aa)). Active-site charge relay system residues include Ser-121, Asp-145, and His-295.

The protein belongs to the AB hydrolase superfamily.

It localises to the mitochondrion. The catalysed reaction is ethanol + acetyl-CoA = ethyl acetate + CoA. It catalyses the reaction acetyl-CoA + H2O = acetate + CoA + H(+). The enzyme catalyses ethyl acetate + H2O = ethanol + acetate + H(+). With respect to regulation, by ethanol. Thioesterase and esterase reactions are highly repressed in the presence of high ethanol concentrations. Alcohol acetyltransferase that catalyzes the synthesis of ethyl acetate from ethanol and acetyl-CoA. Can also function as a thioesterase by hydrolyzing acetyl-CoA in the absence of ethanol, as well as esterase hydrolyzing ethyl acetate. This Wickerhamomyces anomalus (strain ATCC 58044 / CBS 1984 / NCYC 433 / NRRL Y-366-8) (Yeast) protein is Ethanol acetyltransferase 1 (EAT1).